The following is a 346-amino-acid chain: Dihydroorotase (346 aa).

Zn(2+)-binding residues include histidine 13 and histidine 15. Residues 15–17 (HLR) and asparagine 41 each bind substrate. Zn(2+) is bound by residues lysine 99, histidine 136, and histidine 174. At lysine 99 the chain carries N6-carboxylysine. Residue histidine 136 participates in substrate binding. Position 219 (leucine 219) interacts with substrate. A Zn(2+)-binding site is contributed by aspartate 247. Residue aspartate 247 is part of the active site. Substrate-binding residues include histidine 251 and alanine 263.

Belongs to the metallo-dependent hydrolases superfamily. DHOase family. Class II DHOase subfamily. In terms of assembly, homodimer. Zn(2+) is required as a cofactor.

It catalyses the reaction (S)-dihydroorotate + H2O = N-carbamoyl-L-aspartate + H(+). It functions in the pathway pyrimidine metabolism; UMP biosynthesis via de novo pathway; (S)-dihydroorotate from bicarbonate: step 3/3. In terms of biological role, catalyzes the reversible cyclization of carbamoyl aspartate to dihydroorotate. In Picosynechococcus sp. (strain ATCC 27264 / PCC 7002 / PR-6) (Agmenellum quadruplicatum), this protein is Dihydroorotase.